We begin with the raw amino-acid sequence, 226 residues long: MKMETFLVCLFHNADGLHQQIQEILYLLRMHIYETNLYLKQELSRLIYPNRQLSFVLLMPLSLLRNWDDIEYLTDVVDDKQTLHYAANLLTNYVLHLSMFQKLTKPYFLLAVKRVSEKLNKKQRHSFYEVLVTSETLNNYENLSKNILNTLMFAVRYVFKPTPNYSEILAELEKKNKIHHIIFNMVITDFAQIREQQMDKHLCETNNELRQECKETIFDLKVVGNV.

A signal peptide spans 1–16 (MKMETFLVCLFHNADG). 2 N-linked (GlcNAc...) asparagine; by host glycosylation sites follow: Asn142 and Asn164.

The protein belongs to the asfivirus I226R family.

Plays a role in the inhibition of host NF-kappa-B and IRF3 signaling pathways. Mechanistically, promotes the degradation of host IKBKG through enhancing its ubiquitination leading to inhibition of both pathways. This is Late protein I226R from African swine fever virus (isolate Tick/South Africa/Pretoriuskop Pr4/1996) (ASFV).